The chain runs to 539 residues: T-complex protein 1 subunit delta (539 aa).

The disordered stretch occupies residues 1-28 (MPENVASRSGPPAAGPGNRGKGAYQDRD). Arginine 19 bears the Omega-N-methylarginine mark. N6-acetyllysine is present on lysine 21. Phosphoserine is present on serine 36. An ADP-binding site is contributed by glycine 53. Residue glycine 53 participates in ATP binding. Residue aspartate 104 coordinates Mg(2+). Residues glycine 105, threonine 106, threonine 107, serine 108, asparagine 172, serine 173, and lysine 174 each contribute to the ADP site. 2 residues coordinate ATP: glycine 105 and threonine 106. Lysine 174 is a binding site for ATP. Phosphoserine is present on residues serine 184 and serine 202. N6-acetyllysine occurs at positions 288, 302, 319, and 326. Residue glycine 425 coordinates ADP. Position 444 is a phosphoserine (serine 444). Glutamine 510 provides a ligand contact to ADP.

The protein belongs to the TCP-1 chaperonin family. As to quaternary structure, component of the chaperonin-containing T-complex (TRiC), a hexadecamer composed of two identical back-to-back stacked rings enclosing a protein folding chamber. Each ring is made up of eight different subunits: TCP1/CCT1, CCT2, CCT3, CCT4, CCT5, CCT6A/CCT6, CCT7, CCT8. Interacts with PACRG. Interacts with DNAAF4. Interacts with DLEC1.

It localises to the cytoplasm. It is found in the melanosome. Its subcellular location is the cytoskeleton. The protein localises to the microtubule organizing center. The protein resides in the centrosome. It localises to the cilium basal body. The catalysed reaction is ATP + H2O = ADP + phosphate + H(+). In terms of biological role, component of the chaperonin-containing T-complex (TRiC), a molecular chaperone complex that assists the folding of actin, tubulin and other proteins upon ATP hydrolysis. The TRiC complex mediates the folding of WRAP53/TCAB1, thereby regulating telomere maintenance. As part of the TRiC complex may play a role in the assembly of BBSome, a complex involved in ciliogenesis regulating transports vesicles to the cilia. This chain is T-complex protein 1 subunit delta (Cct4), found in Rattus norvegicus (Rat).